Consider the following 165-residue polypeptide: 3-hydroxyacyl-[acyl-carrier-protein] dehydratase FERN, mitochondrial (165 aa).

Residues 1 to 35 (MLMKRLFSSSHVFSSSSASSNLLKIGSVLKQARTF) constitute a mitochondrion transit peptide. Residues 36–124 (ADDDVLGYSK…AVSIRQIKNK (89 aa)) enclose the MaoC-like domain.

In terms of assembly, homodimer.

Its subcellular location is the mitochondrion. It carries out the reaction a (3R)-hydroxyacyl-[ACP] = a (2E)-enoyl-[ACP] + H2O. The protein operates within lipid metabolism; fatty acid biosynthesis. In terms of biological role, 3-hydroxyl-[acyl-carrier-protein] (3-hydroxyl-ACP) dehydratase required for mitochondrial fatty acid synthesis (mtFAS). Essential for photorespiration, tomato morphogenesis and plant development, probably by influencing mitochondrial membrane lipid composition and other lipid metabolic pathways, and by contributing to energy supply and reactive oxygen species (ROS) homeostasis. The protein is 3-hydroxyacyl-[acyl-carrier-protein] dehydratase FERN, mitochondrial of Solanum lycopersicum (Tomato).